We begin with the raw amino-acid sequence, 160 residues long: Cytochrome b6-f complex subunit 4 (160 aa).

3 consecutive transmembrane segments (helical) span residues 36 to 56 (LLYM…GLAV), 95 to 115 (LLGI…PFIE), and 131 to 151 (AVFL…ALPI).

This sequence belongs to the cytochrome b family. PetD subfamily. As to quaternary structure, the 4 large subunits of the cytochrome b6-f complex are cytochrome b6, subunit IV (17 kDa polypeptide, PetD), cytochrome f and the Rieske protein, while the 4 small subunits are PetG, PetL, PetM and PetN. The complex functions as a dimer.

It localises to the cellular thylakoid membrane. In terms of biological role, component of the cytochrome b6-f complex, which mediates electron transfer between photosystem II (PSII) and photosystem I (PSI), cyclic electron flow around PSI, and state transitions. This Synechococcus elongatus (strain ATCC 33912 / PCC 7942 / FACHB-805) (Anacystis nidulans R2) protein is Cytochrome b6-f complex subunit 4.